The sequence spans 99 residues: Cell division protein FtsB (99 aa).

At 1–3 the chain is on the cytoplasmic side; sequence MKF. Residues 4–21 traverse the membrane as a helical segment; that stretch reads FVITLIVLLGLLQYRLWS. At 22-99 the chain is on the periplasmic side; that stretch reads GDNSLPEYFV…GDRAVSSPSQ (78 aa). Residues 31–73 are a coiled coil; the sequence is VLQKQIAAQQDGNAKLNERNQVLKEEIIDLKSGTEAIEERARN.

Belongs to the FtsB family. In terms of assembly, part of a complex composed of FtsB, FtsL and FtsQ.

It is found in the cell inner membrane. Essential cell division protein. May link together the upstream cell division proteins, which are predominantly cytoplasmic, with the downstream cell division proteins, which are predominantly periplasmic. This Shewanella oneidensis (strain ATCC 700550 / JCM 31522 / CIP 106686 / LMG 19005 / NCIMB 14063 / MR-1) protein is Cell division protein FtsB.